The primary structure comprises 552 residues: Putative transport protein NT01EI_3867 (552 aa).

The next 5 helical transmembrane spans lie at 4-24, 26-46, 65-85, 90-112, and 158-178; these read IALTVSMLSLVAVLGLWIGNW, IYGVGLGIGGVLFGGIIVGHF, FGLILFVYSIGIQVGPGFFSS, GLRLNAFAVLMVLISGLITAAIH, and MGYAMAYPFGICGILLVIWLI. RCK C-terminal domains are found at residues 191-276 and 279-361; these read RDFD…VIGE and DTSL…IVGN. 6 consecutive transmembrane segments (helical) span residues 371 to 391, 403 to 425, 439 to 459, 464 to 484, 493 to 513, and 530 to 550; these read MLPVFIGIGLGVLLGSVPLFI, AGGPLVVALILGRIGSIGKLYWF, IVLFLAVVGLKSGGNFIDTLL, VTWIGYGILITAIPLLTAALL, YLTLCGMLAGAMTDPPALAFA, and VYPLAMFLRIMSPQLLALLFW.

Belongs to the AAE transporter (TC 2.A.81) family. YidE subfamily.

The protein localises to the cell membrane. The chain is Putative transport protein NT01EI_3867 from Edwardsiella ictaluri (strain 93-146).